The following is a 500-amino-acid chain: L-arabinose isomerase (500 aa).

Mn(2+) contacts are provided by E306, E333, H350, and H450.

Belongs to the arabinose isomerase family. Homohexamer. Requires Mn(2+) as cofactor.

The enzyme catalyses beta-L-arabinopyranose = L-ribulose. Its pathway is carbohydrate degradation; L-arabinose degradation via L-ribulose; D-xylulose 5-phosphate from L-arabinose (bacterial route): step 1/3. Its function is as follows. Catalyzes the conversion of L-arabinose to L-ribulose. This chain is L-arabinose isomerase, found in Shigella flexneri.